A 279-amino-acid chain; its full sequence is tRNA pseudouridine synthase A (279 aa).

Catalysis depends on D54, which acts as the Nucleophile. Residue Y112 participates in substrate binding.

Belongs to the tRNA pseudouridine synthase TruA family. In terms of assembly, homodimer.

It carries out the reaction uridine(38/39/40) in tRNA = pseudouridine(38/39/40) in tRNA. Functionally, formation of pseudouridine at positions 38, 39 and 40 in the anticodon stem and loop of transfer RNAs. The protein is tRNA pseudouridine synthase A of Cutibacterium acnes (strain DSM 16379 / KPA171202) (Propionibacterium acnes).